The following is a 201-amino-acid chain: Large ribosomal subunit protein uL4 (201 aa).

Residues 44 to 71 (RAQKTRAEVSGSGKKPWRQKGTGRARSG) are disordered.

It belongs to the universal ribosomal protein uL4 family. Part of the 50S ribosomal subunit.

One of the primary rRNA binding proteins, this protein initially binds near the 5'-end of the 23S rRNA. It is important during the early stages of 50S assembly. It makes multiple contacts with different domains of the 23S rRNA in the assembled 50S subunit and ribosome. Functionally, forms part of the polypeptide exit tunnel. This is Large ribosomal subunit protein uL4 from Proteus mirabilis (strain HI4320).